The following is a 299-amino-acid chain: MTNIIFSLQPTFTQGLILGQLSVLVLLGLILKYLFLDSTKNPFETTSYHPQFDRKPARKQQAQDSQSQSEIDDVESLDWFNLLLQQVANVYRSKLRGDLAGAEGDETARQRIEAFANKIRPAGFLDLIKIHSVDLGAGAPTLFNARIRESDPNDPDSPPEIEFDAVYEDTLSLSLSTSYLFNYPTASFARLPISLTISLSQFKSSIRVIPPTPDSVAPVLTFTISPDFVLDLTTTSLMGSRAKLANVPKLHELIQHQVRRVLGGRATWKVVLPGLASVAEAKQQVLKQEQEESKRQEEA.

At 1 to 15 the chain is on the lumenal side; that stretch reads MTNIIFSLQPTFTQG. The chain crosses the membrane as a helical span at residues 16 to 36; sequence LILGQLSVLVLLGLILKYLFL. At 37–299 the chain is on the cytoplasmic side; that stretch reads DSTKNPFETT…QEESKRQEEA (263 aa). Residues 47 to 68 form a disordered region; that stretch reads SYHPQFDRKPARKQQAQDSQSQ. In terms of domain architecture, SMP-LTD spans 73-281; sequence DVESLDWFNL…LPGLASVAEA (209 aa).

It belongs to the MMM1 family. In terms of assembly, homodimer. Component of the ER-mitochondria encounter structure (ERMES) or MDM complex, composed of MMM1, MDM10, MDM12 and MDM34. An MMM1 homodimer associates with one molecule of MDM12 on each side in a pairwise head-to-tail manner, and the SMP-LTD domains of MMM1 and MDM12 generate a continuous hydrophobic tunnel for phospholipid trafficking.

Its subcellular location is the endoplasmic reticulum membrane. Component of the ERMES/MDM complex, which serves as a molecular tether to connect the endoplasmic reticulum (ER) and mitochondria. Components of this complex are involved in the control of mitochondrial shape and protein biogenesis, and function in nonvesicular lipid trafficking between the ER and mitochondria. The MDM12-MMM1 subcomplex functions in the major beta-barrel assembly pathway that is responsible for biogenesis of all outer membrane beta-barrel proteins, and acts in a late step after the SAM complex. The MDM10-MDM12-MMM1 subcomplex further acts in the TOM40-specific pathway after the action of the MDM12-MMM1 complex. Essential for establishing and maintaining the structure of mitochondria and maintenance of mtDNA nucleoids. This chain is Maintenance of mitochondrial morphology protein 1, found in Coprinopsis cinerea (strain Okayama-7 / 130 / ATCC MYA-4618 / FGSC 9003) (Inky cap fungus).